The primary structure comprises 337 residues: tRNA(Ile)-lysidine synthase (337 aa).

ATP is bound at residue 40-45; sequence SGGQDS.

It belongs to the tRNA(Ile)-lysidine synthase family.

Its subcellular location is the cytoplasm. The enzyme catalyses cytidine(34) in tRNA(Ile2) + L-lysine + ATP = lysidine(34) in tRNA(Ile2) + AMP + diphosphate + H(+). Its function is as follows. Ligates lysine onto the cytidine present at position 34 of the AUA codon-specific tRNA(Ile) that contains the anticodon CAU, in an ATP-dependent manner. Cytidine is converted to lysidine, thus changing the amino acid specificity of the tRNA from methionine to isoleucine. The sequence is that of tRNA(Ile)-lysidine synthase from Parasynechococcus marenigrum (strain WH8102).